Consider the following 409-residue polypeptide: Lysosome-associated membrane glycoprotein 1 (409 aa).

The first 25 residues, M1–S25, serve as a signal peptide directing secretion. A first lumenal domain region spans residues A26 to C187. Residues A26–M374 are Lumenal-facing. Residues N34, N59, N72, N80, N103, N117, N126, N146, N161, and N179 are each glycosylated (N-linked (GlcNAc...) asparagine). C38 and C76 form a disulfide bridge. An intrachain disulfide couples C151 to C187. Positions F180–A207 are disordered. The interval E188 to S219 is hinge. Residues P194–A207 are compositionally biased toward pro residues. Residues N215, N220, N241, N253, N260, N285, N299, and N314 are each glycosylated (N-linked (GlcNAc...) asparagine). The segment at N220–M374 is second lumenal domain. C223 and C261 are joined by a disulfide. The cysteines at positions 330 and 367 are disulfide-linked. A helical membrane pass occupies residues L375–G398. The Cytoplasmic portion of the chain corresponds to R399 to I409.

The protein belongs to the LAMP family. In terms of assembly, interacts with ABCB9; this interaction strongly stabilizes ABCB9 and protects ABCB9 against lysosomal degradation. Interacts with FURIN. Interacts with TMEM175; inhibiting the proton channel activity of TMEM175. Post-translationally, O- and N-glycosylated; some of the N-glycans attached to LAMP-1 are polylactosaminoglycans.

The protein localises to the lysosome membrane. The protein resides in the endosome membrane. It is found in the late endosome membrane. It localises to the cell membrane. Its subcellular location is the cytolytic granule membrane. Lysosomal membrane glycoprotein which plays an important role in lysosome biogenesis, lysosomal pH regulation, autophagy and cholesterol homeostasis. Acts as an important regulator of lysosomal lumen pH regulation by acting as a direct inhibitor of the proton channel TMEM175, facilitating lysosomal acidification for optimal hydrolase activity. Also plays an important role in NK-cells cytotoxicity. Mechanistically, participates in cytotoxic granule movement to the cell surface and perforin trafficking to the lytic granule. In addition, protects NK-cells from degranulation-associated damage induced by their own cytotoxic granule content. Presents carbohydrate ligands to selectins. This Bos taurus (Bovine) protein is Lysosome-associated membrane glycoprotein 1 (LAMP1).